Consider the following 642-residue polypeptide: Threonine--tRNA ligase (642 aa).

Residues 1-61 (MPVITLPDGS…ETDVDLAIIT (61 aa)) form the TGS domain. The interval 243-534 (DHRKIGKQLD…LIEEYAGKFP (292 aa)) is catalytic. Zn(2+) contacts are provided by cysteine 334, histidine 385, and histidine 511.

This sequence belongs to the class-II aminoacyl-tRNA synthetase family. Homodimer. Requires Zn(2+) as cofactor.

The protein resides in the cytoplasm. It carries out the reaction tRNA(Thr) + L-threonine + ATP = L-threonyl-tRNA(Thr) + AMP + diphosphate + H(+). In terms of biological role, catalyzes the attachment of threonine to tRNA(Thr) in a two-step reaction: L-threonine is first activated by ATP to form Thr-AMP and then transferred to the acceptor end of tRNA(Thr). Also edits incorrectly charged L-seryl-tRNA(Thr). The protein is Threonine--tRNA ligase of Shewanella loihica (strain ATCC BAA-1088 / PV-4).